Here is a 480-residue protein sequence, read N- to C-terminus: Glutamyl-tRNA(Gln) amidotransferase subunit A (480 aa).

Catalysis depends on charge relay system residues Lys74 and Ser149. Ser173 acts as the Acyl-ester intermediate in catalysis.

This sequence belongs to the amidase family. GatA subfamily. Heterotrimer of A, B and C subunits.

The enzyme catalyses L-glutamyl-tRNA(Gln) + L-glutamine + ATP + H2O = L-glutaminyl-tRNA(Gln) + L-glutamate + ADP + phosphate + H(+). Its function is as follows. Allows the formation of correctly charged Gln-tRNA(Gln) through the transamidation of misacylated Glu-tRNA(Gln) in organisms which lack glutaminyl-tRNA synthetase. The reaction takes place in the presence of glutamine and ATP through an activated gamma-phospho-Glu-tRNA(Gln). This is Glutamyl-tRNA(Gln) amidotransferase subunit A from Prochlorococcus marinus (strain MIT 9312).